We begin with the raw amino-acid sequence, 179 residues long: Lebocin-3 (179 aa).

An N-terminal signal peptide occupies residues 1 to 16 (MYKFLVFSSVLVLFFA). Residues 17–120 (QASCQRFIQP…QPIESHRNTR (104 aa)) constitute a propeptide that is removed on maturation. Thr135 carries O-linked (GalNAc...) threonine glycosylation. A propeptide spanning residues 153–179 (RRHASEDQEELRQYNEHFLIPRDIFQE) is cleaved from the precursor.

Belongs to the lebocin family. In terms of processing, O-glycosylation is important for the antibacterial activity of lebocin. In terms of tissue distribution, hemolymph. Produced in fat body.

It localises to the secreted. Functionally, antibacterial peptide. The sequence is that of Lebocin-3 (LEB3) from Bombyx mori (Silk moth).